The following is a 328-amino-acid chain: Phosphate acyltransferase (328 aa).

It belongs to the PlsX family. Homodimer. Probably interacts with PlsY.

It is found in the cytoplasm. The catalysed reaction is a fatty acyl-[ACP] + phosphate = an acyl phosphate + holo-[ACP]. It functions in the pathway lipid metabolism; phospholipid metabolism. Functionally, catalyzes the reversible formation of acyl-phosphate (acyl-PO(4)) from acyl-[acyl-carrier-protein] (acyl-ACP). This enzyme utilizes acyl-ACP as fatty acyl donor, but not acyl-CoA. The sequence is that of Phosphate acyltransferase from Staphylococcus aureus (strain USA300).